The chain runs to 1041 residues: Pre-mRNA-splicing factor ATP-dependent RNA helicase DHX16 (1041 aa).

2 disordered regions span residues 101–207 (EDSE…AYEE) and 371–391 (LQGDEEPSAPPTSTQAQQKES). A phosphoserine mark is found at S103, S106, and S107. Positions 119–130 (QKKRKKRKHLRK) are enriched in basic residues. Residue S160 is modified to Phosphoserine. A compositionally biased stretch (basic and acidic residues) spans 166–207 (RTERERLQDLEERDAFAERVRQRDKDRTRNVLERSDKKAYEE). Over residues 381–391 (PTSTQAQQKES) the composition is skewed to polar residues. The Helicase ATP-binding domain maps to 409 to 573 (LAAIANHQVL…FDDAPVFRIP (165 aa)). 422–429 (GETGSGKT) serves as a coordination point for ATP. Residues 520–523 (DEAH) carry the DEAH box motif. The region spanning 598–771 (SVLQIHVTQP…NVVLLLKSLG (174 aa)) is the Helicase C-terminal domain. A Phosphothreonine modification is found at T712.

The protein belongs to the DEAD box helicase family. DEAH subfamily. DDX16/PRP8 sub-subfamily. As to quaternary structure, component of pre-catalytic spliceosome complexes. Component of the minor spliceosome, which splices U12-type introns. Interacts with GPKOW. Interacts with TRIM6. Interacts with RIGI. In terms of tissue distribution, expressed in the spleen, thyroid and testis. Also expressed in the brain and cerebellum.

The protein resides in the nucleus. Its subcellular location is the nucleoplasm. The protein localises to the cytoplasm. It carries out the reaction ATP + H2O = ADP + phosphate + H(+). Functionally, required for pre-mRNA splicing as a component of the spliceosome. Contributes to pre-mRNA splicing after spliceosome formation and prior to the first transesterification reaction. As a component of the minor spliceosome, involved in the splicing of U12-type introns in pre-mRNAs. Also plays a role in innate antiviral response by acting as a pattern recognition receptor sensing splicing signals in viral RNA. Mechanistically, TRIM6 promotes the interaction between unanchored 'Lys-48'-polyubiquitin chains and DHX16, leading to DHX16 interaction with RIGI and ssRNA to amplify RIGI-dependent innate antiviral immune responses. The polypeptide is Pre-mRNA-splicing factor ATP-dependent RNA helicase DHX16 (DHX16) (Homo sapiens (Human)).